A 357-amino-acid chain; its full sequence is NAD kinase 1 (357 aa).

The Proton acceptor role is filled by Asp-68. NAD(+)-binding positions include 68–69 (DG), Arg-73, 175–176 (ND), Arg-186, Asp-205, Ala-240, and Gln-275.

The protein belongs to the NAD kinase family. The cofactor is a divalent metal cation.

The protein localises to the cytoplasm. The enzyme catalyses NAD(+) + ATP = ADP + NADP(+) + H(+). Involved in the regulation of the intracellular balance of NAD and NADP, and is a key enzyme in the biosynthesis of NADP. Catalyzes specifically the phosphorylation on 2'-hydroxyl of the adenosine moiety of NAD to yield NADP. The sequence is that of NAD kinase 1 from Streptomyces avermitilis (strain ATCC 31267 / DSM 46492 / JCM 5070 / NBRC 14893 / NCIMB 12804 / NRRL 8165 / MA-4680).